A 78-amino-acid polypeptide reads, in one-letter code: DNA-directed RNA polymerase subunit Rpo5 (78 aa).

It belongs to the archaeal Rpo5/eukaryotic RPB5 RNA polymerase subunit family. In terms of assembly, part of the RNA polymerase complex.

It is found in the cytoplasm. It catalyses the reaction RNA(n) + a ribonucleoside 5'-triphosphate = RNA(n+1) + diphosphate. Functionally, DNA-dependent RNA polymerase (RNAP) catalyzes the transcription of DNA into RNA using the four ribonucleoside triphosphates as substrates. This Methanothrix thermoacetophila (strain DSM 6194 / JCM 14653 / NBRC 101360 / PT) (Methanosaeta thermophila) protein is DNA-directed RNA polymerase subunit Rpo5.